A 389-amino-acid polypeptide reads, in one-letter code: Alkanesulfonate monooxygenase (389 aa).

The protein belongs to the SsuD family.

The enzyme catalyses an alkanesulfonate + FMNH2 + O2 = an aldehyde + FMN + sulfite + H2O + 2 H(+). Its function is as follows. Catalyzes the desulfonation of aliphatic sulfonates. This chain is Alkanesulfonate monooxygenase, found in Variovorax paradoxus (strain S110).